We begin with the raw amino-acid sequence, 482 residues long: tRNA sulfurtransferase (482 aa).

Residues 61-165 (LTIRDALTRI…DDRLLLIKGR (105 aa)) enclose the THUMP domain. ATP is bound by residues 183–184 (LI), Lys-265, Gly-287, and Gln-296. A disulfide bridge links Cys-344 with Cys-456. A Rhodanese domain is found at 404–482 (CGPNDVILDI…GFNNVKVYRP (79 aa)). Residue Cys-456 is the Cysteine persulfide intermediate of the active site.

The protein belongs to the ThiI family.

It localises to the cytoplasm. It catalyses the reaction [ThiI sulfur-carrier protein]-S-sulfanyl-L-cysteine + a uridine in tRNA + 2 reduced [2Fe-2S]-[ferredoxin] + ATP + H(+) = [ThiI sulfur-carrier protein]-L-cysteine + a 4-thiouridine in tRNA + 2 oxidized [2Fe-2S]-[ferredoxin] + AMP + diphosphate. The catalysed reaction is [ThiS sulfur-carrier protein]-C-terminal Gly-Gly-AMP + S-sulfanyl-L-cysteinyl-[cysteine desulfurase] + AH2 = [ThiS sulfur-carrier protein]-C-terminal-Gly-aminoethanethioate + L-cysteinyl-[cysteine desulfurase] + A + AMP + 2 H(+). The protein operates within cofactor biosynthesis; thiamine diphosphate biosynthesis. Catalyzes the ATP-dependent transfer of a sulfur to tRNA to produce 4-thiouridine in position 8 of tRNAs, which functions as a near-UV photosensor. Also catalyzes the transfer of sulfur to the sulfur carrier protein ThiS, forming ThiS-thiocarboxylate. This is a step in the synthesis of thiazole, in the thiamine biosynthesis pathway. The sulfur is donated as persulfide by IscS. The sequence is that of tRNA sulfurtransferase from Shigella dysenteriae serotype 1 (strain Sd197).